The chain runs to 75 residues: Protein SlyX homolog (75 aa).

This sequence belongs to the SlyX family.

This Vibrio atlanticus (strain LGP32) (Vibrio splendidus (strain Mel32)) protein is Protein SlyX homolog.